Here is a 206-residue protein sequence, read N- to C-terminus: Small ribosomal subunit protein uS4 (206 aa).

The region spanning 96 to 159 (SRLDNVVYRM…KKQARIVEGL (64 aa)) is the S4 RNA-binding domain.

The protein belongs to the universal ribosomal protein uS4 family. As to quaternary structure, part of the 30S ribosomal subunit. Contacts protein S5. The interaction surface between S4 and S5 is involved in control of translational fidelity.

Functionally, one of the primary rRNA binding proteins, it binds directly to 16S rRNA where it nucleates assembly of the body of the 30S subunit. With S5 and S12 plays an important role in translational accuracy. This is Small ribosomal subunit protein uS4 from Chromobacterium violaceum (strain ATCC 12472 / DSM 30191 / JCM 1249 / CCUG 213 / NBRC 12614 / NCIMB 9131 / NCTC 9757 / MK).